Consider the following 418-residue polypeptide: L-rhamnose isomerase (418 aa).

Positions 262, 294, and 296 each coordinate Mn(2+).

The protein belongs to the rhamnose isomerase family. Homotetramer. Mn(2+) serves as cofactor.

Its subcellular location is the cytoplasm. The enzyme catalyses L-rhamnopyranose = L-rhamnulose. Its pathway is carbohydrate degradation; L-rhamnose degradation; glycerone phosphate from L-rhamnose: step 1/3. In terms of biological role, catalyzes the interconversion of L-rhamnose and L-rhamnulose. In Cronobacter sakazakii (strain ATCC BAA-894) (Enterobacter sakazakii), this protein is L-rhamnose isomerase.